The primary structure comprises 480 residues: Protein nucleotidyltransferase YdiU (480 aa).

Residues glycine 86, glycine 88, arginine 89, lysine 109, aspartate 121, glycine 122, arginine 172, and arginine 179 each contribute to the ATP site. Aspartate 248 functions as the Proton acceptor in the catalytic mechanism. Mg(2+)-binding residues include asparagine 249 and aspartate 258. Aspartate 258 lines the ATP pocket.

Belongs to the SELO family. Requires Mg(2+) as cofactor. It depends on Mn(2+) as a cofactor.

It catalyses the reaction L-seryl-[protein] + ATP = 3-O-(5'-adenylyl)-L-seryl-[protein] + diphosphate. The catalysed reaction is L-threonyl-[protein] + ATP = 3-O-(5'-adenylyl)-L-threonyl-[protein] + diphosphate. The enzyme catalyses L-tyrosyl-[protein] + ATP = O-(5'-adenylyl)-L-tyrosyl-[protein] + diphosphate. It carries out the reaction L-histidyl-[protein] + UTP = N(tele)-(5'-uridylyl)-L-histidyl-[protein] + diphosphate. It catalyses the reaction L-seryl-[protein] + UTP = O-(5'-uridylyl)-L-seryl-[protein] + diphosphate. The catalysed reaction is L-tyrosyl-[protein] + UTP = O-(5'-uridylyl)-L-tyrosyl-[protein] + diphosphate. Its function is as follows. Nucleotidyltransferase involved in the post-translational modification of proteins. It can catalyze the addition of adenosine monophosphate (AMP) or uridine monophosphate (UMP) to a protein, resulting in modifications known as AMPylation and UMPylation. The chain is Protein nucleotidyltransferase YdiU from Klebsiella pneumoniae subsp. pneumoniae (strain ATCC 700721 / MGH 78578).